A 236-amino-acid chain; its full sequence is Peptidase E (236 aa).

Active-site charge relay system residues include serine 122, aspartate 137, and histidine 159.

It belongs to the peptidase S51 family.

The protein resides in the cytoplasm. It catalyses the reaction Dipeptidase E catalyzes the hydrolysis of dipeptides Asp-|-Xaa. It does not act on peptides with N-terminal Glu, Asn or Gln, nor does it cleave isoaspartyl peptides.. In terms of biological role, hydrolyzes dipeptides containing N-terminal aspartate residues. May play a role in allowing the cell to use peptide aspartate to spare carbon otherwise required for the synthesis of the aspartate family of amino acids. The protein is Peptidase E of Shewanella sp. (strain ANA-3).